We begin with the raw amino-acid sequence, 126 residues long: uncharacterized protein (126 aa).

Positions methionine 1–serine 27 are disordered. Acidic residues predominate over residues aspartate 10–serine 27.

This is an uncharacterized protein from Halorubrum sp. PV6 (HRPV-1).